A 312-amino-acid chain; its full sequence is Glyoxylate/hydroxypyruvate reductase A (312 aa).

The active site involves R227. H275 (proton donor) is an active-site residue.

This sequence belongs to the D-isomer specific 2-hydroxyacid dehydrogenase family. GhrA subfamily.

It is found in the cytoplasm. The enzyme catalyses glycolate + NADP(+) = glyoxylate + NADPH + H(+). It catalyses the reaction (R)-glycerate + NAD(+) = 3-hydroxypyruvate + NADH + H(+). It carries out the reaction (R)-glycerate + NADP(+) = 3-hydroxypyruvate + NADPH + H(+). Its function is as follows. Catalyzes the NADPH-dependent reduction of glyoxylate and hydroxypyruvate into glycolate and glycerate, respectively. This Shigella dysenteriae serotype 1 (strain Sd197) protein is Glyoxylate/hydroxypyruvate reductase A.